Consider the following 586-residue polypeptide: 2-succinyl-5-enolpyruvyl-6-hydroxy-3-cyclohexene-1-carboxylate synthase (586 aa).

It belongs to the TPP enzyme family. MenD subfamily. In terms of assembly, homodimer. Mg(2+) serves as cofactor. Mn(2+) is required as a cofactor. The cofactor is thiamine diphosphate.

The enzyme catalyses isochorismate + 2-oxoglutarate + H(+) = 5-enolpyruvoyl-6-hydroxy-2-succinyl-cyclohex-3-ene-1-carboxylate + CO2. Its pathway is quinol/quinone metabolism; 1,4-dihydroxy-2-naphthoate biosynthesis; 1,4-dihydroxy-2-naphthoate from chorismate: step 2/7. It participates in cofactor biosynthesis; phylloquinone biosynthesis. In terms of biological role, catalyzes the thiamine diphosphate-dependent decarboxylation of 2-oxoglutarate and the subsequent addition of the resulting succinic semialdehyde-thiamine pyrophosphate anion to isochorismate to yield 2-succinyl-5-enolpyruvyl-6-hydroxy-3-cyclohexene-1-carboxylate (SEPHCHC). The polypeptide is 2-succinyl-5-enolpyruvyl-6-hydroxy-3-cyclohexene-1-carboxylate synthase (Acaryochloris marina (strain MBIC 11017)).